A 1035-amino-acid chain; its full sequence is Cell-division control histidine kinase PdhS (1035 aa).

Residues 1-613 form an important for polar localization region; that stretch reads MSGSYPFIDI…HADGSEEPVD (613 aa). Residues 500–533 are disordered; it reads QGLANTRAESETPVSETSSIEPVEPTPPVKTRSE. Positions 614–1035 are interaction with DivK; sequence AHLNAIAWRG…VFPPTRVLAD (422 aa). The PAS domain maps to 659–730; that stretch reads HVEELKTILD…YLHGLSGNGV (72 aa). The 230-residue stretch at 802-1031 folds into the Histidine kinase domain; the sequence is RISHEIRTPL…VVEIVFPPTR (230 aa). Histidine 805 is subject to Phosphohistidine; by autocatalysis.

As to quaternary structure, interacts with DivK.

It is found in the cytoplasm. The catalysed reaction is ATP + protein L-histidine = ADP + protein N-phospho-L-histidine.. In terms of biological role, functions as a polar differentiation marker. Essential protein that, by localizing in the old pole of dividing cells, controls cell division and maturation, probably through control of DivK phosphorylation status and cellular distribution, which in turn regulates CtrA, a transcriptional regulator of the minB operon. The asymmetrical localization of this protein is probably required for cells to enter a new division cycle. This chain is Cell-division control histidine kinase PdhS (pdhS), found in Brucella ovis (strain ATCC 25840 / 63/290 / NCTC 10512).